The sequence spans 289 residues: 4-hydroxy-3-methylbut-2-enyl diphosphate reductase (289 aa).

Cys12 contacts [4Fe-4S] cluster. His44 and His81 together coordinate (2E)-4-hydroxy-3-methylbut-2-enyl diphosphate. Positions 44 and 81 each coordinate dimethylallyl diphosphate. Residues His44 and His81 each contribute to the isopentenyl diphosphate site. Cys103 lines the [4Fe-4S] cluster pocket. His130 provides a ligand contact to (2E)-4-hydroxy-3-methylbut-2-enyl diphosphate. His130 provides a ligand contact to dimethylallyl diphosphate. Residue His130 coordinates isopentenyl diphosphate. Glu132 acts as the Proton donor in catalysis. Thr174 contacts (2E)-4-hydroxy-3-methylbut-2-enyl diphosphate. Cys202 is a binding site for [4Fe-4S] cluster. The (2E)-4-hydroxy-3-methylbut-2-enyl diphosphate site is built by Ser230, Asn232, and Ser273. Dimethylallyl diphosphate contacts are provided by Ser230, Asn232, and Ser273. Isopentenyl diphosphate contacts are provided by Ser230, Asn232, and Ser273.

It belongs to the IspH family. Requires [4Fe-4S] cluster as cofactor.

It carries out the reaction isopentenyl diphosphate + 2 oxidized [2Fe-2S]-[ferredoxin] + H2O = (2E)-4-hydroxy-3-methylbut-2-enyl diphosphate + 2 reduced [2Fe-2S]-[ferredoxin] + 2 H(+). The enzyme catalyses dimethylallyl diphosphate + 2 oxidized [2Fe-2S]-[ferredoxin] + H2O = (2E)-4-hydroxy-3-methylbut-2-enyl diphosphate + 2 reduced [2Fe-2S]-[ferredoxin] + 2 H(+). It participates in isoprenoid biosynthesis; dimethylallyl diphosphate biosynthesis; dimethylallyl diphosphate from (2E)-4-hydroxy-3-methylbutenyl diphosphate: step 1/1. The protein operates within isoprenoid biosynthesis; isopentenyl diphosphate biosynthesis via DXP pathway; isopentenyl diphosphate from 1-deoxy-D-xylulose 5-phosphate: step 6/6. In terms of biological role, catalyzes the conversion of 1-hydroxy-2-methyl-2-(E)-butenyl 4-diphosphate (HMBPP) into a mixture of isopentenyl diphosphate (IPP) and dimethylallyl diphosphate (DMAPP). Acts in the terminal step of the DOXP/MEP pathway for isoprenoid precursor biosynthesis. This is 4-hydroxy-3-methylbut-2-enyl diphosphate reductase from Treponema denticola (strain ATCC 35405 / DSM 14222 / CIP 103919 / JCM 8153 / KCTC 15104).